The chain runs to 138 residues: ATP synthase subunit g, mitochondrial (138 aa).

It belongs to the ATPase g subunit family. In terms of assembly, F-type ATP synthases have 2 components, the catalytic core F(1) and the membrane-embedded component F(0), linked together by a central stalk and a peripheral stalk. The central stalk, also called rotor shaft, is often seen as part of F(1). The peripheral stalk is seen as part of F(0). F(0) contains the membrane channel next to the rotor. F-type ATP synthases form dimers but each monomer functions independently in ATP generation. The dimer consists of 17 different polypeptides: ATP1 (subunit alpha, 3 molecules per monomer, part of F(1)), ATP2 (subunit beta, 3 copies per monomer, part of F(1)), ATP3 (subunit gamma, part of the central stalk), ATP4 (subunit b, part of the peripheral stalk), ATP5/OSCP (subunit 5/OSCP, part of the peripheral stalk), ATP6 (subunit a, part of the peripheral stalk), ATP7 (subunit d, part of the peripheral stalk), ATP8 (subunit 8, part of the peripheral stalk), OLI1 (subunit c, part of the rotor, 10 molecules per monomer), ATP14 (subunit h, part of the peripheral stalk), ATP15 (subunit epsilon, part of the central stalk), ATP16 (subunit delta, part of the central stalk), ATP17 (subunit f, part of the peripheral stalk), ATP18 (subunit i/j, part of the peripheral stalk), ATP19 (subunit k, dimer-specific, at interface between monomers), ATP20 (subunit g, at interface between monomers), TIM11 (subunit e, at interface between monomers).

Its subcellular location is the mitochondrion inner membrane. Mitochondrial membrane ATP synthase (F(1)F(0) ATP synthase or Complex V) produces ATP from ADP in the presence of a proton gradient across the membrane which is generated by electron transport complexes of the respiratory chain. F-type ATP synthases consist of two structural domains, F(1) - containing the extramembraneous catalytic core, and F(0) - containing the membrane proton channel, linked together by a central stalk and a peripheral stalk. During catalysis, ATP synthesis in the catalytic domain of F(1) is coupled via a rotary mechanism of the central stalk subunits to proton translocation. Part of the complex F(0) domain. Minor subunit located with subunit a/ATP6 in the membrane. Together with subunit e/TIM11, probably contributes to membrane curvature at the site of the ATP synthase dimer, ultimately contributing to formation of cristae. This chain is ATP synthase subunit g, mitochondrial, found in Yarrowia lipolytica (strain CLIB 122 / E 150) (Yeast).